The chain runs to 394 residues: Phosphoglycerate kinase (394 aa).

Residues 21–23 (DFN), Arg-36, 59–62 (HLGR), Arg-118, and Arg-151 contribute to the substrate site. Residues Lys-202, Gly-293, Glu-324, and 350–353 (GGDS) contribute to the ATP site.

It belongs to the phosphoglycerate kinase family. In terms of assembly, monomer.

The protein localises to the cytoplasm. The enzyme catalyses (2R)-3-phosphoglycerate + ATP = (2R)-3-phospho-glyceroyl phosphate + ADP. It functions in the pathway carbohydrate degradation; glycolysis; pyruvate from D-glyceraldehyde 3-phosphate: step 2/5. The chain is Phosphoglycerate kinase from Exiguobacterium sp. (strain ATCC BAA-1283 / AT1b).